Here is a 448-residue protein sequence, read N- to C-terminus: Tryptamine benzoyltransferase 2 (448 aa).

The segment at 1–20 is disordered; that stretch reads MEITSSAMLKPAPTPTPHPL. Residues His-155 and Asp-386 each act as proton acceptor in the active site.

The protein belongs to the plant acyltransferase family.

In terms of biological role, hydroxycinnamoyl transferase that catalyzes the transfer of an acyl from benzoyl-CoA to tryptamine, to produce benzoyl tryptamine. Serotonin and tyramine serve as acyl acceptors in vitro. Specific for benzoyl-CoA as acyl donor. Has no activity with p-coumaroyl-CoA, caffeoyl-CoA, or feruloyl-CoA as acyl donors. The protein is Tryptamine benzoyltransferase 2 of Oryza sativa subsp. japonica (Rice).